The primary structure comprises 286 residues: MTFTIMTDSTADLNQTWAEDHDIVLIGLTILCDGEVYETVGPNRISSDYLLKKMKAGSHPQTSQINVGEFEKVFREHARNNKALLYLAFSSVLSGTYQSALMARDLVREDYPDAVIEIVDTLAAAGGEGYLTILAAEARDSGKNLLETKDIVEAVIPRLRTYFLVDDLFHLMRGGRLSKGSAFLGSLASIKPLLWIDEEGKLVPIAKIRGRQKAIKEMVAQVEKDIADSTVIVSYTSDQGSAEKLREELLAHENISDVLMMPLGPVISAHVGPNTLAVFVIGQNSR.

Residues Phe3 to Gly282 enclose the DegV domain. Thr62 and Ser94 together coordinate hexadecanoate.

In terms of biological role, may bind long-chain fatty acids, such as palmitate, and may play a role in lipid transport or fatty acid metabolism. The chain is DegV domain-containing protein M6_Spy1658 from Streptococcus pyogenes serotype M6 (strain ATCC BAA-946 / MGAS10394).